Reading from the N-terminus, the 491-residue chain is MKMAAPTANKAASLGCNNKPAFPELDFRSGARVEELNKLIQEFTKHDQREYDDQRALEIHTAKDFIFSMLGMVQKLDQKLPVANEYLLLSGGVREGVVDLDLDELNVYARGTDYDMDFTLLVPALKLHDRNQPVTLDMRHSALCHSWLSLRLFDEGTISKWKDCCTIVDHINGATNYFFSPTKVADWFYDSISIVLSEIQKKPQRGMPKVEKVEKNGTIISIILGVGSSRMLYDIVPVVSFKGWPAVAQSWLMENHFWDGKITEEEVISGFYLVPACSYKGKKDNEWRLSFARSEVQLKKCISSSLMQAYQACKAIIIKLLSRPKAISPYHLRSMMLWACDRLPANYLAQEDYAAHFLLGLIDDLQHCLVNKMCPNYFIPQCNMLEHLSEETVMLHARKLSSVRSDPAEHLRTAIEHVKAANRLTLELQRRGSTTSIPSPQSDGGDPNQPDDRLAKKLQQLVTENPGKSISVFINPDDVTRPHFRIDDKFF.

A compositionally biased stretch (polar residues) spans arginine 431–serine 442. Residues arginine 431–aspartate 452 form a disordered region. Threonine 435 is modified (phosphothreonine). Residues serine 436, serine 439, and serine 442 each carry the phosphoserine modification.

The protein belongs to the mab-21 family.

Probable nucleotidyltransferase that catalyzes the formation of cyclic dinucleotide second messenger in response to some unknown stimulus. This chain is Nucleotidyltransferase MB21D2, found in Homo sapiens (Human).